We begin with the raw amino-acid sequence, 319 residues long: MTRPALIGDIGGTNARFALVTPGAFDLHDIRTLPCAHYPSLSDAIRAYLKEVGAEMPTEACLAFACPVHDDEVRMTNNAWRFSKRQVAEEFGFTLFKVINDFTAQALGVPHVADDELVALGDGEAAPGCTRLIFGPGTGLGMAGLFPGQHDWIPLPTEGGHISFAPTDQHERDLLAYFQARYGRVSVERILCGQGLLDLYRAHAQLAKQVARYNTPAEVTGAARAGDPLARNALERFLKILGDVSGDAALMLGARGGVYLCGGILPRLLDWLPHSHFRDAFADKGRMHAYTAHIPVWVVTAPWNGLLGACEALHNEEVT.

8-13 lines the ATP pocket; that stretch reads GDIGGT.

The protein belongs to the bacterial glucokinase family.

It is found in the cytoplasm. It carries out the reaction D-glucose + ATP = D-glucose 6-phosphate + ADP + H(+). The chain is Glucokinase from Chromohalobacter salexigens (strain ATCC BAA-138 / DSM 3043 / CIP 106854 / NCIMB 13768 / 1H11).